Consider the following 137-residue polypeptide: Large ribosomal subunit protein eL32 (137 aa).

The segment at 95–137 is disordered; the sequence is PSAAEIATPVSSRKRIASSPARQADRCSRSRRSKFRPRRLRAS. Over residues 123 to 137 the composition is skewed to basic residues; it reads RSRRSKFRPRRLRAS.

It belongs to the eukaryotic ribosomal protein eL32 family.

The chain is Large ribosomal subunit protein eL32 (rpl32) from Trichoderma harzianum (Hypocrea lixii).